We begin with the raw amino-acid sequence, 142 residues long: Protein E6 (142 aa).

Zinc fingers lie at residues C30–C66 and C103–C139.

The protein belongs to the papillomaviridae E6 protein family. Forms homodimers. Interacts with ubiquitin-protein ligase UBE3A/E6-AP; this interaction stimulates UBE3A ubiquitin activity. Interacts with host BAK1.

It is found in the host cytoplasm. The protein localises to the host nucleus. Plays a major role in the induction and maintenance of cellular transformation. E6 associates with host UBE3A/E6-AP ubiquitin-protein ligase and modulates its activity. Protects host keratinocytes from apoptosis by mediating the degradation of host BAK1. May also inhibit host immune response. The protein is Protein E6 of Homo sapiens (Human).